Consider the following 1363-residue polypeptide: Neurexin-1 (1363 aa).

At 1–1287 (SKRRDMTVFS…EVIRESSSTT (1287 aa)) the chain is on the extracellular side. The N-linked (GlcNAc...) asparagine glycan is linked to Asn-49. An EGF-like 1 domain is found at 67–105 (QSRLCAREDVCLNGGVCSVLNDQAVCDCSQTGFRGKDCS). 3 cysteine pairs are disulfide-bonded: Cys-71-Cys-83, Cys-77-Cys-92, and Cys-94-Cys-104. 2 Laminin G-like domains span residues 132-329 (IATF…AFKC) and 336-528 (DPIT…KPSC). Ca(2+) is bound by residues Asp-178, Leu-195, and Met-263. 5 disulfides stabilise this stretch: Cys-293-Cys-329, Cys-499-Cys-528, Cys-536-Cys-547, Cys-541-Cys-556, and Cys-558-Cys-568. The EGF-like 2 domain occupies 532-569 (TAKPCLSNPCKNNGVCRDGWNRYVCDCSGTGYLGRSCE). 2 consecutive Laminin G-like domains span residues 574-747 (ILSY…IDYC) and 761-936 (DPVT…ERGC). Asn-646 carries N-linked (GlcNAc...) asparagine glycosylation. 4 cysteine pairs are disulfide-bonded: Cys-908/Cys-936, Cys-943/Cys-954, Cys-948/Cys-963, and Cys-965/Cys-975. One can recognise an EGF-like 3 domain in the interval 939 to 976 (PSTTCQEDSCANQGVCLQQWDGFSCDCSMTSFSGPLCN). The region spanning 982 to 1180 (YIFSKGGGQI…DANIVIEGNV (199 aa)) is the Laminin G-like 5 domain. The N-linked (GlcNAc...) asparagine glycan is linked to Asn-1079. Residues 1244–1280 (CPSDDEDIDPCEPSSGGLANPTRAGGGREYPGSSEVI) form a disordered region. The helical transmembrane segment at 1288-1308 (GMVVGIVAAAALCILILLYAM) threads the bilayer. The Cytoplasmic segment spans residues 1309-1363 (YKYRNRDEGSYHVDESRNYISNSAQSNGAVIKEKQPNSAKSSNKNKKNKDKEYYV). Residues 1330-1363 (NSAQSNGAVIKEKQPNSAKSSNKNKKNKDKEYYV) are disordered.

This sequence belongs to the neurexin family. The cytoplasmic C-terminal region binds to CASK. The laminin G-like domain 1 binds to NXPH1. Specific isoforms bind to alpha-dystroglycan and to alpha-latrotoxin. In terms of processing, N- and O-glycosylated.

Its subcellular location is the membrane. Functionally, neuronal cell surface protein that may be involved in cell recognition and cell adhesion. May mediate intracellular signaling. This chain is Neurexin-1 (NRXN1), found in Gallus gallus (Chicken).